Consider the following 895-residue polypeptide: DNA mismatch repair protein MutS (895 aa).

607-614 (GPNMSGKS) serves as a coordination point for ATP.

This sequence belongs to the DNA mismatch repair MutS family.

This protein is involved in the repair of mismatches in DNA. It is possible that it carries out the mismatch recognition step. This protein has a weak ATPase activity. This is DNA mismatch repair protein MutS from Bacillus cytotoxicus (strain DSM 22905 / CIP 110041 / 391-98 / NVH 391-98).